The sequence spans 334 residues: UDP-N-acetylglucosamine--N-acetylmuramyl-(pentapeptide) pyrophosphoryl-undecaprenol N-acetylglucosamine transferase (334 aa).

Residues 11-13 (TGG), N125, S185, I229, and Q274 contribute to the UDP-N-acetyl-alpha-D-glucosamine site.

The protein belongs to the glycosyltransferase 28 family. MurG subfamily.

The protein localises to the cell inner membrane. The catalysed reaction is di-trans,octa-cis-undecaprenyl diphospho-N-acetyl-alpha-D-muramoyl-L-alanyl-D-glutamyl-meso-2,6-diaminopimeloyl-D-alanyl-D-alanine + UDP-N-acetyl-alpha-D-glucosamine = di-trans,octa-cis-undecaprenyl diphospho-[N-acetyl-alpha-D-glucosaminyl-(1-&gt;4)]-N-acetyl-alpha-D-muramoyl-L-alanyl-D-glutamyl-meso-2,6-diaminopimeloyl-D-alanyl-D-alanine + UDP + H(+). The protein operates within cell wall biogenesis; peptidoglycan biosynthesis. Its function is as follows. Cell wall formation. Catalyzes the transfer of a GlcNAc subunit on undecaprenyl-pyrophosphoryl-MurNAc-pentapeptide (lipid intermediate I) to form undecaprenyl-pyrophosphoryl-MurNAc-(pentapeptide)GlcNAc (lipid intermediate II). The protein is UDP-N-acetylglucosamine--N-acetylmuramyl-(pentapeptide) pyrophosphoryl-undecaprenol N-acetylglucosamine transferase of Thermosipho melanesiensis (strain DSM 12029 / CIP 104789 / BI429).